Consider the following 377-residue polypeptide: 3-dehydroquinate synthase (377 aa).

NAD(+) is bound by residues 113–117 (GVIGD), 137–138 (TT), Lys-150, Lys-159, and 177–180 (FLDT). Residues Glu-192, His-254, and His-273 each contribute to the Zn(2+) site.

The protein belongs to the sugar phosphate cyclases superfamily. Dehydroquinate synthase family. Co(2+) serves as cofactor. The cofactor is Zn(2+). Requires NAD(+) as cofactor.

The protein resides in the cytoplasm. The enzyme catalyses 7-phospho-2-dehydro-3-deoxy-D-arabino-heptonate = 3-dehydroquinate + phosphate. It functions in the pathway metabolic intermediate biosynthesis; chorismate biosynthesis; chorismate from D-erythrose 4-phosphate and phosphoenolpyruvate: step 2/7. Functionally, catalyzes the conversion of 3-deoxy-D-arabino-heptulosonate 7-phosphate (DAHP) to dehydroquinate (DHQ). The sequence is that of 3-dehydroquinate synthase from Bartonella quintana (strain Toulouse) (Rochalimaea quintana).